Reading from the N-terminus, the 81-residue chain is Trefoil factor 1 (81 aa).

Residues 1-21 (MEHKVTCVLAMVLMLALSSLA) form the signal peptide. Residue glutamine 22 is modified to Pyrrolidone carboxylic acid. The P-type domain occupies 26 to 69 (ETCAVIPRERINCGFPGVTAQQCKEKGCCFDDSVRGFPWCFRPL). Cystine bridges form between cysteine 28–cysteine 54, cysteine 38–cysteine 53, and cysteine 48–cysteine 65.

It localises to the secreted. Stabilizer of the mucous gel overlying the gastrointestinal mucosa that provides a physical barrier against various noxious agents. The chain is Trefoil factor 1 (Tff1) from Rattus norvegicus (Rat).